Here is a 518-residue protein sequence, read N- to C-terminus: Probable triacylglyceride transporter BCG_1471c (518 aa).

14 helical membrane-spanning segments follow: residues 7–27 (VAIS…YVVV), 46–66 (RITW…PLLG), 76–96 (LMLQ…ALAG), 110–130 (IQGV…ADLW), 144–164 (AAQE…VWLL), 170–190 (VFWI…FSLP), 201–221 (VDLV…IGLY), 230–250 (VLPD…VAFF), 270–290 (PFLS…VTLV), 308–328 (AGML…GGWI), 337–357 (VAFA…HWPV), 379–401 (LVVA…LRVV), 408–428 (IASA…VAAL), and 475–495 (IFTI…LISG).

This sequence belongs to the major facilitator superfamily.

Its subcellular location is the cell inner membrane. Inhibited by CCCP and valinomycin. Functionally, in association with lipoprotein LprG probably transports triacylglycerides (TAG) across the inner cell membrane into the periplasm; TAG probably regulates lipid metabolism and growth regulation. Confers resistance to several drugs such as rifampicin, clofazimine and novobiocin; is also part of the oxidative stress response and is needed to maintain normal growth characteristics. Probably an efflux transporter, involved in maintaining correct cell wall permeability. Probably required with LprG for normal surface localization of lipoarabinomannan (LAM). Required for optimal growth on cholesterol. In Mycobacterium bovis (strain BCG / Pasteur 1173P2), this protein is Probable triacylglyceride transporter BCG_1471c.